A 988-amino-acid chain; its full sequence is Junction-mediating and -regulatory protein (988 aa).

The interaction with p300/EP300 stretch occupies residues 1 to 126; sequence MSFALEETLE…RSTRSLLGDP (126 aa). The tract at residues 51 to 178 is disordered; the sequence is AQRQRSGSRE…RPAPREAQVS (128 aa). Serine 115 and serine 121 each carry phosphoserine. Low complexity predominate over residues 160 to 175; that stretch reads AAGAAAAAARPAPREA. Coiled coils occupy residues 324 to 360, 489 to 541, and 590 to 621; these read SELRQKGYEEVLQRARKRIQELLDKHKNTESMVELLD, LQMM…YEVQ, and ASAYLQREELQKLQQKARQLEARRGRVSAKKS. The tract at residues 478 to 567 is interaction with p300/EP300; the sequence is EKLQYAVSKE…SIKRLISEKR (90 aa). Position 713 is a phosphoserine (serine 713). A compositionally biased stretch (basic and acidic residues) spans 731–742; that stretch reads EEKTEEVGEGRV. Disordered regions lie at residues 731–755 and 800–865; these read EEKTEEVGEGRVKRGPSQTTEPQSL and INPL…LFDS. Residues 746-755 show a composition bias toward polar residues; sequence PSQTTEPQSL. The segment covering 803-827 has biased composition (pro residues); sequence LPSPLPPTPPPPPPPPPPPPPPPLP. Positions 832-851 are enriched in basic and acidic residues; the sequence is SGPETLEKDLPRKEGNEKRI. Serine 888 carries the post-translational modification Phosphoserine. A WH2 domain is found at 921 to 938; sequence DSNNILAQIRKGVKLKKV. The tract at residues 967–988 is disordered; it reads IKEASPESEDEEEALPCTDWEN. Residues 972–988 are compositionally biased toward acidic residues; it reads PESEDEEEALPCTDWEN. Residue serine 974 is modified to Phosphoserine.

The protein belongs to the JMY family. As to quaternary structure, interacts with p300/EP300, the complex activates p53/TP53 transcriptional activity. Interacts with TTC5; the interaction facilitates the association between JMY and p300/EP300. Interacts with MAP1LC3B; the interaction results in the activation of JYM's nucleation activity in the cytoplasm. Interacts with TTC5/STRAP; the interaction results in the inhibition of JYM's nucleation activity in the cytoplasm due to competition with MAP1LC3B binding. Ubiquitinated by MDM2, leading to its subsequent degradation by the proteasome. In case of DNA damage, the interaction with MDM2 is altered, preventing degradation and allowing interaction with p300/EP300 and its function in p53/TP53 stress response.

It is found in the nucleus. It localises to the cytoplasmic vesicle. The protein localises to the cytoplasm. Its subcellular location is the cytoskeleton. The protein resides in the endomembrane system. It is found in the autophagosome membrane. Acts both as a nuclear p53/TP53-cofactor and a cytoplasmic regulator of actin dynamics depending on conditions. In nucleus, acts as a cofactor that increases p53/TP53 response via its interaction with p300/EP300. Increases p53/TP53-dependent transcription and apoptosis, suggesting an important role in p53/TP53 stress response such as DNA damage. In cytoplasm, acts as a nucleation-promoting factor for both branched and unbranched actin filaments. Activates the Arp2/3 complex to induce branched actin filament networks. Also catalyzes actin polymerization in the absence of Arp2/3, creating unbranched filaments. Contributes to cell motility by controlling actin dynamics. May promote the rapid formation of a branched actin network by first nucleating new mother filaments and then activating Arp2/3 to branch off these filaments. Upon nutrient stress, directly recruited by MAP1LC3B to the phagophore membrane surfaces to promote actin assembly during autophagy. The p53/TP53-cofactor and actin activator activities are regulated via its subcellular location. In Homo sapiens (Human), this protein is Junction-mediating and -regulatory protein (JMY).